A 185-amino-acid chain; its full sequence is Elongation factor P (185 aa).

The protein belongs to the elongation factor P family.

The protein resides in the cytoplasm. It participates in protein biosynthesis; polypeptide chain elongation. Functionally, involved in peptide bond synthesis. Stimulates efficient translation and peptide-bond synthesis on native or reconstituted 70S ribosomes in vitro. Probably functions indirectly by altering the affinity of the ribosome for aminoacyl-tRNA, thus increasing their reactivity as acceptors for peptidyl transferase. This chain is Elongation factor P, found in Acaryochloris marina (strain MBIC 11017).